The following is a 223-amino-acid chain: FAD-dependent monooxygenase imqC (223 aa).

Residues 139–141 (RFY), Tyr189, and Asp210 each bind FAD.

It belongs to the PheA/TfdB FAD monooxygenase family.

It participates in secondary metabolite biosynthesis. Its function is as follows. FAD-dependent monooxygenase; part of the gene cluster that mediates the biosynthesis of imizoquins A to D, tripeptide-derived alkaloids that serve a protective role against oxidative stress that are essential for normal germination. ImqB is a canonical three-module NRPS that assembles the tripeptide backbone of the imizoquins via condensation of Trp, Tyr, and Leu-derived precursors. N-methylation by imqF and phenol oxidation by imqC, followed by cyclization via the FAD-dependent oxidase imqH carry out the three-step transformation of L-tyrosine into tetrahydroisoquinoline. Importantly, this sequence requires the presence of a free amine in the tyrosine moiety, indicating that isoquinoline formation occurs prior to peptide bond formation. The imidazolidin-4-one ring of imizoquins could form following additional oxidation of the methyl-derived bridgehead carbon by imqH. Lastly, O-methylation by imqG and leucine hydroxylation by imqE complete biosynthesis of the imizoquins. The chain is FAD-dependent monooxygenase imqC from Aspergillus flavus (strain ATCC 200026 / FGSC A1120 / IAM 13836 / NRRL 3357 / JCM 12722 / SRRC 167).